The sequence spans 453 residues: Citrate (Re)-synthase (453 aa).

Positions 46–316 constitute a Pyruvate carboxyltransferase domain; it reads IYITDTTFRD…TKNMKLHVIT (271 aa).

Belongs to the alpha-IPM synthase/homocitrate synthase family. Mn(2+) is required as a cofactor. Requires Co(2+) as cofactor. Mg(2+) serves as cofactor.

It catalyses the reaction oxaloacetate + acetyl-CoA + H2O = citrate + CoA + H(+). With respect to regulation, inhibited by p-chloromercuribenzoate (pCMB), EDTA, Zn(2+) ions, and under aerobic conditions. Functionally, catalyzes the condensation of the acetyl group of acetyl-CoA with oxaloacetate to form citrate. This enzyme is highly Re-face stereospecific with respect to the C-2 of oxaloacetate. The protein is Citrate (Re)-synthase of Clostridium kluyveri (strain ATCC 8527 / DSM 555 / NBRC 12016 / NCIMB 10680 / K1).